The primary structure comprises 502 residues: Cyanidin 3-O-glucoside 5-O-glucosyltransferase (acyl-glucose) (502 aa).

Residues 1–30 form the signal peptide; it reads MNMSCKFEIVLLVSWWLLLVLVFGVESSMF. N2 carries N-linked (GlcNAc...) asparagine glycosylation. Residues Q52, H150, and 196 to 197 contribute to the a beta-D-glucoside site; that span reads NE. E197 (proton donor) is an active-site residue. N303 carries N-linked (GlcNAc...) asparagine glycosylation. A beta-D-glucoside contacts are provided by Y320 and E388. E388 functions as the Nucleophile in the catalytic mechanism. An N-linked (GlcNAc...) asparagine glycan is attached at N425. 2 residues coordinate a beta-D-glucoside: W435 and F451.

It belongs to the glycosyl hydrolase 1 family. In terms of tissue distribution, expressed in petals.

It localises to the vacuole. The enzyme catalyses cyanidin 3-O-beta-D-glucoside + 1-O-(trans-sinapoyl)-beta-D-glucose = cyanidin 3,5-di-O-beta-D-glucoside + (E)-sinapate. Its pathway is pigment biosynthesis; anthocyanin biosynthesis. In terms of biological role, beta-glycosidase that catalyzes the transfer of glucose moiety to anthocyanidin 3-glucoside at the 5 position. Anthocyanins are ubiquitous colored pigments that are responsible for variations in petal color. Uses acyl-glucoses, but not UDP-glucose, as the glucose donor. This is Cyanidin 3-O-glucoside 5-O-glucosyltransferase (acyl-glucose) (AA5GT) from Dianthus caryophyllus (Carnation).